The primary structure comprises 253 residues: E3 ubiquitin-protein ligase MARCHF3 (253 aa).

Residues 63–123 (SPFNDRPMCR…ELCHFRFAVE (61 aa)) form an RING-CH-type zinc finger. 8 residues coordinate Zn(2+): cysteine 71, cysteine 74, cysteine 87, cysteine 89, histidine 97, cysteine 100, cysteine 113, and cysteine 116. 2 consecutive transmembrane segments (helical) span residues 145 to 165 (LFGD…SGWL) and 182 to 202 (AVGL…WTLV). Phosphoserine occurs at positions 237 and 243.

In terms of assembly, interacts with MARCHF2 and STX6. Expressed predominantly in lung, colon and spleen. Present in liver (at protein level).

Its subcellular location is the cytoplasmic vesicle membrane. It is found in the early endosome membrane. It carries out the reaction S-ubiquitinyl-[E2 ubiquitin-conjugating enzyme]-L-cysteine + [acceptor protein]-L-lysine = [E2 ubiquitin-conjugating enzyme]-L-cysteine + N(6)-ubiquitinyl-[acceptor protein]-L-lysine.. It participates in protein modification; protein ubiquitination. E3 ubiquitin-protein ligase which may be involved in endosomal trafficking. E3 ubiquitin ligases accept ubiquitin from an E2 ubiquitin-conjugating enzyme in the form of a thioester and then directly transfer the ubiquitin to targeted substrates. The polypeptide is E3 ubiquitin-protein ligase MARCHF3 (Marchf3) (Rattus norvegicus (Rat)).